We begin with the raw amino-acid sequence, 337 residues long: Ribosomal RNA small subunit methyltransferase H (337 aa).

Residues 45–47 (GGH), aspartate 64, phenylalanine 91, aspartate 120, and glutamine 127 contribute to the S-adenosyl-L-methionine site.

It belongs to the methyltransferase superfamily. RsmH family.

It localises to the cytoplasm. It catalyses the reaction cytidine(1402) in 16S rRNA + S-adenosyl-L-methionine = N(4)-methylcytidine(1402) in 16S rRNA + S-adenosyl-L-homocysteine + H(+). Its function is as follows. Specifically methylates the N4 position of cytidine in position 1402 (C1402) of 16S rRNA. In Corynebacterium glutamicum (strain R), this protein is Ribosomal RNA small subunit methyltransferase H.